The following is a 2266-amino-acid chain: MMPGETHSAAPGTAADLSRCQGCASLQQNLNEYVEALITLKQKIINTDNLLTEYQKKCDELQFARRENSNLHHQVEEMLQKISPLQKCQEELGSLKAELEEKKSSLKLYQDTHQEYARVKEECLKSDAQKKKLEAKVKKLQEAAVKQTQDFKQLRNEKKILEKEFKKTQERLDEFSKQKNEKELRHIGTQISSDSYGSIDKRKVKLLLKELWLCVNTTHRLPGEGSRCVPEKPAKAITSSRVPGEDGTLPPTQGSPLRTSNVQTCLTKLSMEIKEDFLCQNVEKQSSSGTNCSSDHVFNENGNLEVLVQSHRDGGSTEFVDHDHFFDEDLQAAIDFFKLPPPLLSPVPSPPPMSSPHPGSLPSSFAPETYFGEYTDSSDNDSVQLRNSAECVSEDDTTESQNYFGSLRKNKGSGTWEEKPKSHEAIQALNTWEVNKVTTSGLETFTATLRESSATHSLVGEKHWTTASRSMSDRKRDILHETKTQMEVREMDKSVQTEKTIHKLTRGLCIERLSASPAQEKEAAPGKSELCSSPLGKRPLNELMESEGKTVLSKMMGSPKSEFTKWTRINEITSEPDRITVSGHFHRLSRELEKEKEDTQGFTLGESPESEDDDSGDGMDVAGLDIETSFSSSSTLVALSVGSNPQSSSGLDCGNDTDITTKVFSTEPHHSEHKLQTKTLNTLHLQSEPPECSIGGNNLENSLCALSPELGASNFNDQKSSGIEYTKVVKGLTKIHSLPRSVFMKATKDGQCESQDPRIELTLNKPDFTSLIGSQAALIKSGLGFVKSTSWHHSDLLRKGGEESLRAKSEHEQKTSHQLQKAMPFLQNRGPTPKPDLLRENNNPVEFKTTASVLPNQVSVITKQTRPEKVQSAKLEHLRPHRVEPTLVTENSGNKTGMSTVAKCDGERDDTTQNITEVAAVKSISPEVSASRRKLDFNSPGGSSPVENSDCSTNSRLSFSPENILIQNQDIVREAAVQGDGQKQRQPQATDLDSSGTHGSEMLPATEVTVSGGFSVEETSCGDTGRSGGEALAVANDSTSTPQNANGLWKLKSTTPGGALPECFGTTDTTFSSAFCRKHGETQDTSQSSLPGTLHCYTGIREGGDDTEVESEAFSCSEGSEQQDAPDDSQKNLGDTDAAVAEVRPSLEVGYLTSALQDFNISTFSELDRLSTSEVVMFLESCQLGDYSSGDSVSECSSKGTLSKEMNKELKASEIGEKYRKQPCEEETLGTCEEWIESEEDDYSLKNTSQLTQCSLETLSEVLTKIRQELQTNSEDCNGKDTGSLLLLNVNNNMTTENLKEKSPFRETTGSSSHASEPTPQAAALDTEGSSPISGMPQNENPQSRPEARSDAGRQTDGGEEDLPEPVEPSALCSDSVMEPSIEQSSNCEAETTFQCQIATVTSEVINVLINKDQNLVIEKGDNWTIISGVAVLPHVDQVTLCDIPGDIPISQDQGELEAGCIPVTSAEKSPEASHTGPAFQEAPCGNNLSCPQEDVSSSGQSTNFDKSRLRNRPVKPSIWISSQIYDQNFETQIVASDHTYYNSKLEPSGKNKNRSKISNKDQSNKPVKTSASSRVETHQSEVAQSFSGEKANTKTQRSQTQTILANADTSTPTDCSPDTLSKIRQEVGPPLPPLLAPLIATPPRTSQPLSPLISSSSPSSPASPVGQVSPFRETPVPPAMSPWPEDPRRASPPDPSPSPSAASASERVVPSPLQFCAATPKHALPVPGRLPPCASGHAAVGGPQENSVKILDTMYPELSARARTLNILKGNIQLTRGPPADCKNLPGPASAMIGFKTITSAATAFVKTGSSSGGDCNQDKSRDLGTQQDSSGKRTLSTSTLRSAKRLRLDTGSPEPETRGVTAEGIHKNLPGNLPPAEVATTNEERSCSSPAVSAVSQLPLSPKETVESHDKAIANALKKIAEFSFDLLPVIRSHVYVGNISKKPVMRDQEKEVVYEFSTTKKHLAECLLHSILSELKIQKISMDHNYIHALCRVYVGICRQLGDLERARLFCYSLLKEDFPESEKLTLFIANMWHDIFLSQSVINKAMQLVARQRAKGEVLNCLRAFLNWEKNAPVDVGFMVSKLLLTIQLCPKTEFQPSEKFGEDLSDNTWEYIFAIDLLCCHQKWIWTHDNIISKELWPVMDKWIKYRKGHANIAYTPDIIIASILRLIGRLGQLGLKEGFPSAVKNISSVIGMFIQHAHDEDIPWGIQLAAVYALCDLSPSNPAEISKILEAWRREASKSVPSAIVSCLEEVSALSTEELG.

Residues 23-186 (CASLQQNLNE…KQKNEKELRH (164 aa)) adopt a coiled-coil conformation. Disordered stretches follow at residues 223 to 259 (GEGSRCVPEKPAKAITSSRVPGEDGTLPPTQGSPLRT) and 517 to 540 (PAQEKEAAPGKSELCSSPLGKRPL). The segment covering 250–259 (PPTQGSPLRT) has biased composition (polar residues). A phosphoserine mark is found at Ser255, Ser533, Ser558, and Ser589. The tract at residues 591–623 (ELEKEKEDTQGFTLGESPESEDDDSGDGMDVAG) is disordered. Positions 608–617 (PESEDDDSGD) are enriched in acidic residues. A Phosphoserine modification is found at Ser707. Phosphothreonine is present on Thr832. Residue Ser925 is modified to Phosphoserine. Residues 925–955 (SPEVSASRRKLDFNSPGGSSPVENSDCSTNS) form a disordered region. The segment covering 940–955 (PGGSSPVENSDCSTNS) has biased composition (polar residues). At Ser958 the chain carries Phosphoserine. 2 disordered regions span residues 977–1001 (VQGDGQKQRQPQATDLDSSGTHGSE) and 1107–1133 (TEVESEAFSCSEGSEQQDAPDDSQKNL). The span at 984-998 (QRQPQATDLDSSGTH) shows a compositional bias: polar residues. An N6-acetyllysine modification is found at Lys1218. 3 disordered regions span residues 1295 to 1372 (TTEN…PSAL), 1467 to 1510 (AEKS…KSRL), and 1543 to 1707 (NSKL…SASE). Polar residues-rich tracts occupy residues 1306-1319 (RETTGSSSHASEPT), 1328-1344 (EGSSPISGMPQNENPQS), 1487-1505 (NNLSCPQEDVSSSGQSTNF), 1565-1588 (NKPVKTSASSRVETHQSEVAQSFS), and 1594-1605 (TKTQRSQTQTIL). Ser1588 is modified (phosphoserine). Low complexity-rich tracts occupy residues 1609–1620 (DTSTPTDCSPDT) and 1637–1671 (APLIATPPRTSQPLSPLISSSSPSSPASPVGQVSP). Phosphoserine is present on Ser1617. The residue at position 1642 (Thr1642) is a Phosphothreonine. Phosphoserine occurs at positions 1692, 1697, 1699, 1701, 1712, 1838, and 1854. Positions 1809-1902 (TGSSSGGDCN…AVSAVSQLPL (94 aa)) are disordered. The segment covering 1825–1843 (LGTQQDSSGKRTLSTSTLR) has biased composition (polar residues). Residues 1889–1901 (CSSPAVSAVSQLP) show a composition bias toward polar residues. At Ser1903 the chain carries Phosphoserine.

This sequence belongs to the ICE1 family. As to quaternary structure, component of the little elongation complex (LEC), at least composed of ELL (ELL, ELL2 or ELL3), ZC3H8, ICE1 and ICE2. Interacts (via N-terminus domain) with ELL. Interacts (via C-terminus domain) with ICE2 and ZC3H8.

The protein localises to the nucleus. The protein resides in the cajal body. Component of the little elongation complex (LEC), a complex required to regulate small nuclear RNA (snRNA) gene transcription by RNA polymerase II and III. Specifically acts as a scaffold protein that promotes the LEC complex formation and recruitment and RNA polymerase II occupancy at snRNA genes in subnuclear bodies. The protein is Little elongation complex subunit 1 (ICE1) of Homo sapiens (Human).